The primary structure comprises 222 residues: Glutathione S-transferase A5 (222 aa).

A2 is subject to N-acetylalanine. Positions 3-83 (EKPKLHYSNA…YIASKYNLYG (81 aa)) constitute a GST N-terminal domain. Residue K4 is modified to N6-succinyllysine. Glutathione contacts are provided by residues Y9, R45, 54-55 (QV), and 67-68 (QT). The GST C-terminal domain occupies 85-208 (DMKERALIDM…QPGSQRKPPM (124 aa)).

This sequence belongs to the GST superfamily. Alpha family. In terms of assembly, homodimer. As to expression, expression not detected.

The protein localises to the cytoplasm. It catalyses the reaction RX + glutathione = an S-substituted glutathione + a halide anion + H(+). This Homo sapiens (Human) protein is Glutathione S-transferase A5 (GSTA5).